Consider the following 549-residue polypeptide: Probable serine/threonine-protein kinase WNK5 (549 aa).

In terms of domain architecture, Protein kinase spans 25–283; it reads GRFREVLGKG…AKELLADPFL (259 aa). ATP-binding positions include 105 to 108 and lysine 155; that span reads TELF. Catalysis depends on aspartate 172, which acts as the Proton acceptor. Residues 414–490 are disordered; that stretch reads ESFGHEDDED…SPAIDDDQNQ (77 aa). The segment covering 452-463 has biased composition (acidic residues); that stretch reads DDSSNDVIPDMD. The segment covering 467 to 476 has biased composition (low complexity); the sequence is RSSNRLLNSS. At serine 504 the chain carries Phosphoserine. The disordered stretch occupies residues 525–549; sequence RGRGFDPNTNELQPQPSSTDFIRRC. Residues 531–549 show a composition bias toward polar residues; that stretch reads PNTNELQPQPSSTDFIRRC.

It belongs to the protein kinase superfamily. Ser/Thr protein kinase family. WNK subfamily. Interacts with AHK4.

It catalyses the reaction L-seryl-[protein] + ATP = O-phospho-L-seryl-[protein] + ADP + H(+). The catalysed reaction is L-threonyl-[protein] + ATP = O-phospho-L-threonyl-[protein] + ADP + H(+). In terms of biological role, regulates flowering time by modulating the photoperiod pathway. This chain is Probable serine/threonine-protein kinase WNK5 (WNK5), found in Arabidopsis thaliana (Mouse-ear cress).